The primary structure comprises 493 residues: MTELTDLSLADARDALRQKKISAAELAMAHIEAVEKARALNAFLLETPERAQAMARASDEKIARGEAGPLEGIPLGIKDLFCTEGVRTTAASHILENFVPAYESSITANLWRDGAVMLGKLNLDEFAMGSSNETSYFGPVVSPWRREGSTAPLTPGGSSGGSAAAVAARLCLGATATDTGGSIRQPAAFTGTVGIKPTYGRCSRWGVVAFASSLDQAGPITRTVRDAAILLRSMAGYDPKDTTSVNLPVPDYEAALGRSIKGMRIGIPKEYRLDAMPAEIGKLWDQGIEWMREAGAEPVEISLPHTRHALPAYYIVAPAEASSNLARYDGVRFGLRVPGKDIAGMYEETRAAGFGKEVRRRILIGTYVLSAGYYDAYYVRAQKIRTLIKRDFEQVFEQGIDAILTPATPSAAFGLGEKGAKDPIEMYLNDIFTVTVNMAGLPGIAVPAGVSAEGLPLGLQLIGRPFDEETLIALSGVIEAAAPRVSYPSSWWG.

Active-site charge relay system residues include lysine 78 and serine 158. The active-site Acyl-ester intermediate is serine 182.

The protein belongs to the amidase family. GatA subfamily. In terms of assembly, heterotrimer of A, B and C subunits.

The catalysed reaction is L-glutamyl-tRNA(Gln) + L-glutamine + ATP + H2O = L-glutaminyl-tRNA(Gln) + L-glutamate + ADP + phosphate + H(+). Its function is as follows. Allows the formation of correctly charged Gln-tRNA(Gln) through the transamidation of misacylated Glu-tRNA(Gln) in organisms which lack glutaminyl-tRNA synthetase. The reaction takes place in the presence of glutamine and ATP through an activated gamma-phospho-Glu-tRNA(Gln). The polypeptide is Glutamyl-tRNA(Gln) amidotransferase subunit A (Beijerinckia indica subsp. indica (strain ATCC 9039 / DSM 1715 / NCIMB 8712)).